The primary structure comprises 135 residues: Small ribosomal subunit protein uS11 (135 aa).

It belongs to the universal ribosomal protein uS11 family. Part of the 30S ribosomal subunit. Interacts with proteins S7 and S18. Binds to IF-3.

Its function is as follows. Located on the platform of the 30S subunit, it bridges several disparate RNA helices of the 16S rRNA. Forms part of the Shine-Dalgarno cleft in the 70S ribosome. This is Small ribosomal subunit protein uS11 from Cutibacterium acnes (strain DSM 16379 / KPA171202) (Propionibacterium acnes).